The primary structure comprises 442 residues: SPRY domain-containing protein 3 (442 aa).

Residues 17 to 204 (DLNLHYRFLN…VRLHLNAELG (188 aa)) enclose the B30.2/SPRY domain. The segment at 371-394 (EGEEEEEEEEEEEDGEEIEPEHEG) is disordered. The segment covering 372 to 390 (GEEEEEEEEEEEDGEEIEP) has biased composition (acidic residues).

In Pongo abelii (Sumatran orangutan), this protein is SPRY domain-containing protein 3 (SPRYD3).